The chain runs to 287 residues: 4-diphosphocytidyl-2-C-methyl-D-erythritol kinase (287 aa).

K12 is a catalytic residue. 95–105 (PAQAGMGGGSS) is a binding site for ATP. D137 is a catalytic residue.

It belongs to the GHMP kinase family. IspE subfamily.

The catalysed reaction is 4-CDP-2-C-methyl-D-erythritol + ATP = 4-CDP-2-C-methyl-D-erythritol 2-phosphate + ADP + H(+). The protein operates within isoprenoid biosynthesis; isopentenyl diphosphate biosynthesis via DXP pathway; isopentenyl diphosphate from 1-deoxy-D-xylulose 5-phosphate: step 3/6. Catalyzes the phosphorylation of the position 2 hydroxy group of 4-diphosphocytidyl-2C-methyl-D-erythritol. The protein is 4-diphosphocytidyl-2-C-methyl-D-erythritol kinase of Delftia acidovorans (strain DSM 14801 / SPH-1).